The primary structure comprises 526 residues: GMP synthase [glutamine-hydrolyzing] (526 aa).

One can recognise a Glutamine amidotransferase type-1 domain in the interval 3–199 (RVAIIDFGSQ…FVRIAGCDNN (197 aa)). C83 functions as the Nucleophile in the catalytic mechanism. Residues H174 and E176 contribute to the active site. Positions 200–392 (WTVESFLDEQ…LGISDEILMR (193 aa)) constitute a GMPS ATP-PPase domain. 227 to 233 (SGGVDSS) serves as a coordination point for ATP.

As to quaternary structure, homodimer.

The enzyme catalyses XMP + L-glutamine + ATP + H2O = GMP + L-glutamate + AMP + diphosphate + 2 H(+). It functions in the pathway purine metabolism; GMP biosynthesis; GMP from XMP (L-Gln route): step 1/1. Its function is as follows. Catalyzes the synthesis of GMP from XMP. This is GMP synthase [glutamine-hydrolyzing] from Ehrlichia chaffeensis (strain ATCC CRL-10679 / Arkansas).